A 265-amino-acid polypeptide reads, in one-letter code: Leucyl/phenylalanyl-tRNA--protein transferase (265 aa).

The disordered stretch occupies residues 244 to 265 (LDTGPDPASSSVTEISLRPAAP).

This sequence belongs to the L/F-transferase family.

It is found in the cytoplasm. The enzyme catalyses N-terminal L-lysyl-[protein] + L-leucyl-tRNA(Leu) = N-terminal L-leucyl-L-lysyl-[protein] + tRNA(Leu) + H(+). It carries out the reaction N-terminal L-arginyl-[protein] + L-leucyl-tRNA(Leu) = N-terminal L-leucyl-L-arginyl-[protein] + tRNA(Leu) + H(+). The catalysed reaction is L-phenylalanyl-tRNA(Phe) + an N-terminal L-alpha-aminoacyl-[protein] = an N-terminal L-phenylalanyl-L-alpha-aminoacyl-[protein] + tRNA(Phe). Its function is as follows. Functions in the N-end rule pathway of protein degradation where it conjugates Leu, Phe and, less efficiently, Met from aminoacyl-tRNAs to the N-termini of proteins containing an N-terminal arginine or lysine. This Methylibium petroleiphilum (strain ATCC BAA-1232 / LMG 22953 / PM1) protein is Leucyl/phenylalanyl-tRNA--protein transferase.